The chain runs to 36 residues: Histone H1-like protein EM5 (36 aa).

In terms of domain architecture, H15 spans Met-1–Ala-36.

The protein belongs to the histone H1/H5 family. As to expression, sperm.

Its subcellular location is the nucleus. The protein localises to the chromosome. The chain is Histone H1-like protein EM5 from Ensis minor (Razor shell).